We begin with the raw amino-acid sequence, 556 residues long: 2,3-bisphosphoglycerate-independent phosphoglycerate mutase (556 aa).

Aspartate 25 and serine 78 together coordinate Mn(2+). The active-site Phosphoserine intermediate is the serine 78. Residues histidine 137, 167 to 168 (RD), arginine 203, arginine 210, 283 to 286 (RADR), and lysine 358 each bind substrate. Positions 427, 431, 468, 469, and 498 each coordinate Mn(2+).

This sequence belongs to the BPG-independent phosphoglycerate mutase family. As to quaternary structure, monomer. The cofactor is Mn(2+). In terms of tissue distribution, found ubiquitously in germinating seed.

The protein resides in the cytoplasm. It catalyses the reaction (2R)-2-phosphoglycerate = (2R)-3-phosphoglycerate. Its pathway is carbohydrate degradation; glycolysis; pyruvate from D-glyceraldehyde 3-phosphate: step 3/5. Its function is as follows. Catalyzes the interconversion of 2-phosphoglycerate and 3-phosphoglycerate. The chain is 2,3-bisphosphoglycerate-independent phosphoglycerate mutase from Ricinus communis (Castor bean).